The primary structure comprises 641 residues: UPF0329 protein ECU11_0030 (641 aa).

Residues 358-387 (RQRKREEETERSVKELVGDEEKAKSKEEKA) are compositionally biased toward basic and acidic residues. The disordered stretch occupies residues 358–444 (RQRKREEETE…KGGKKKSKGG (87 aa)). Residues 435–444 (KGGKKKSKGG) are compositionally biased toward basic residues.

Belongs to the UPF0329 family.

This Encephalitozoon cuniculi (strain GB-M1) (Microsporidian parasite) protein is UPF0329 protein ECU11_0030.